Here is a 192-residue protein sequence, read N- to C-terminus: Der GTPase-activating protein YihI (192 aa).

Residues 1 to 12 show a composition bias toward basic residues; it reads MSAKQPNRKPAG. 2 disordered regions span residues 1-87 and 145-192; these read MSAK…IKEK and DTDD…PKKK. Residues 13-26 show a composition bias toward basic and acidic residues; it reads KRKESDASAQEGRE. Basic residues predominate over residues 27-36; it reads RKRAAKRKGL. The segment covering 145–172 has biased composition (acidic residues); it reads DTDDDEDEADFDEADFDEPGQPASEEEL. The segment covering 183–192 has biased composition (basic and acidic residues); sequence PEPKPEPKKK.

Belongs to the YihI family. As to quaternary structure, interacts with Der.

A GTPase-activating protein (GAP) that modifies Der/EngA GTPase function. May play a role in ribosome biogenesis. The chain is Der GTPase-activating protein YihI from Aeromonas hydrophila subsp. hydrophila (strain ATCC 7966 / DSM 30187 / BCRC 13018 / CCUG 14551 / JCM 1027 / KCTC 2358 / NCIMB 9240 / NCTC 8049).